The sequence spans 341 residues: Pectate trisaccharide-lyase (341 aa).

The signal sequence occupies residues 1 to 27; the sequence is MKKLISIIFIFVLGVVGSLTAAVSAEA. The propeptide occupies 28 to 39; that stretch reads ASALNSGKVNPL. PbH1 repeat units follow at residues 131–156 and 158–186; these read ANNI…GIEG and SKNI…FDVK. Ca(2+) contacts are provided by aspartate 150, aspartate 180, and aspartate 184. The active site involves arginine 233. PbH1 repeat units follow at residues 262 to 283 and 287 to 322; these read GARI…VSWY and PGYW…SLDN.

Belongs to the polysaccharide lyase 1 family. Requires Ca(2+) as cofactor.

It is found in the secreted. It catalyses the reaction eliminative cleavage of unsaturated trigalacturonate as the major product from the reducing end of polygalacturonic acid/pectate.. Its function is as follows. Cleaves unsaturated oligo-galacturonides from pectin. The major product is trigalacturonate; digalacturonate and tetragalacturonate are also produced. Activity on methylated pectins decreases with an increasing degree of methylation. The protein is Pectate trisaccharide-lyase of Bacillus licheniformis (strain ATCC 14580 / DSM 13 / JCM 2505 / CCUG 7422 / NBRC 12200 / NCIMB 9375 / NCTC 10341 / NRRL NRS-1264 / Gibson 46).